The sequence spans 721 residues: Polyribonucleotide nucleotidyltransferase (721 aa).

The Mg(2+) site is built by Asp-495 and Asp-501. Residues 562–621 form the KH domain; it reads PRLLSFRIDPELIGTVIGPGGRTIKNITERTNTKIDIEDSGIVTIASHDGAAAEEAQKII. Residues 631 to 699 enclose the S1 motif domain; that stretch reads GEVFTGSITR…NRGRINLTLR (69 aa). Positions 700-721 are disordered; the sequence is GVPQSGESADSQPAPTPVAPLS.

Belongs to the polyribonucleotide nucleotidyltransferase family. The cofactor is Mg(2+).

Its subcellular location is the cytoplasm. The enzyme catalyses RNA(n+1) + phosphate = RNA(n) + a ribonucleoside 5'-diphosphate. Its function is as follows. Involved in mRNA degradation. Catalyzes the phosphorolysis of single-stranded polyribonucleotides processively in the 3'- to 5'-direction. The protein is Polyribonucleotide nucleotidyltransferase of Synechococcus sp. (strain CC9311).